The sequence spans 215 residues: 3-isopropylmalate dehydratase small subunit (215 aa).

This sequence belongs to the LeuD family. LeuD type 1 subfamily. As to quaternary structure, heterodimer of LeuC and LeuD.

It carries out the reaction (2R,3S)-3-isopropylmalate = (2S)-2-isopropylmalate. It functions in the pathway amino-acid biosynthesis; L-leucine biosynthesis; L-leucine from 3-methyl-2-oxobutanoate: step 2/4. Functionally, catalyzes the isomerization between 2-isopropylmalate and 3-isopropylmalate, via the formation of 2-isopropylmaleate. In Xylella fastidiosa (strain M23), this protein is 3-isopropylmalate dehydratase small subunit.